The sequence spans 267 residues: MRINISLSSLFERLSKLSSRSIAITCGVVLASAIAFPIIRRDYQTFLEVGPSYAPQNFRGYIIVCVLSLFRQEQKGLAIYDRLPEKRRWLADLPFREGTRPSITSHIIQRQRTQLVDQEFATRELIDKVIPRVQARHTDKTFLSTSKFEFHAKAIFLLPSIPINDPLNIPSHDTVRRTKREIAHMHDYHDCTLHLALAAQDGKEVLKKGWGQRHPLAGPGVPGPPTEWTFLYAPRNEEEARVVEMIVEASIGYMTNDPAGKIVENAK.

N4 carries an N-linked (GlcNAc...) asparagine glycan. Residues 17–39 form a helical membrane-spanning segment; it reads LSSRSIAITCGVVLASAIAFPII.

The protein belongs to the fungal luciferase family.

The protein localises to the membrane. It catalyses the reaction 3-hydroxyhispidin + O2 = (E)-caffeoylpyruvate + hnu + CO2. The enzyme catalyses 3-hydroxyhispidin + O2 = 4-[(E)-2-(3,4-dihydroxyphenyl)ethenyl]-1,7-dihydroxy-2,3,5-trioxabicyclo[2.2.2]oct-7-en-6-one. Its function is as follows. Luciferase; part of the gene cluster that mediates the fungal bioluminescence cycle. Uses the fungal luciferin 3-hydroxyhispidin as a substrate to produce an endoperoxide as a high-energy intermediate with decomposition that yields oxyluciferin (also known as caffeoylpyruvate) and light emission. The fungal bioluminescence cycle begins with the hispidin synthetase that catalyzes the formation of hispidin which is further hydroxylated by the hispidin-3-hydroxylase, yielding the fungal luciferin 3-hydroxyhispidin. The luciferase then produces an endoperoxide as a high-energy intermediate with decomposition that yields oxyluciferin and light emission. Oxyluciferin can be recycled to caffeic acid by caffeoylpyruvate hydrolase. The protein is Luciferase of Neonothopanus nambi (Agaricus nambi).